The chain runs to 184 residues: ATP synthase subunit b, chloroplastic (184 aa).

A helical transmembrane segment spans residues 27-49 (LATNPINLSVVFGVLIFFGKGVL).

Belongs to the ATPase B chain family. As to quaternary structure, F-type ATPases have 2 components, F(1) - the catalytic core - and F(0) - the membrane proton channel. F(1) has five subunits: alpha(3), beta(3), gamma(1), delta(1), epsilon(1). F(0) has four main subunits: a(1), b(1), b'(1) and c(10-14). The alpha and beta chains form an alternating ring which encloses part of the gamma chain. F(1) is attached to F(0) by a central stalk formed by the gamma and epsilon chains, while a peripheral stalk is formed by the delta, b and b' chains.

Its subcellular location is the plastid. The protein localises to the chloroplast thylakoid membrane. In terms of biological role, f(1)F(0) ATP synthase produces ATP from ADP in the presence of a proton or sodium gradient. F-type ATPases consist of two structural domains, F(1) containing the extramembraneous catalytic core and F(0) containing the membrane proton channel, linked together by a central stalk and a peripheral stalk. During catalysis, ATP synthesis in the catalytic domain of F(1) is coupled via a rotary mechanism of the central stalk subunits to proton translocation. Its function is as follows. Component of the F(0) channel, it forms part of the peripheral stalk, linking F(1) to F(0). This is ATP synthase subunit b, chloroplastic from Crucihimalaya wallichii (Rock-cress).